We begin with the raw amino-acid sequence, 320 residues long: R2-like ligand binding oxidase (320 aa).

3 residues coordinate Mn(2+): Glu68, Glu101, and His104. The 3-(O4'-tyrosyl)-valine (Val-Tyr) cross-link spans Val71–Tyr162. Glu101 lines the Fe cation pocket. Residues Glu167, Glu202, and His205 each coordinate Fe cation.

It belongs to the ribonucleoside diphosphate reductase small chain family. R2-like ligand binding oxidase subfamily. Homodimer. Fe cation serves as cofactor. Mn(2+) is required as a cofactor.

Probable oxidase that might be involved in lipid metabolism. The sequence is that of R2-like ligand binding oxidase (nrdB) from Mycolicibacterium smegmatis (strain ATCC 700084 / mc(2)155) (Mycobacterium smegmatis).